Here is a 119-residue protein sequence, read N- to C-terminus: Large ribosomal subunit protein bL19 (119 aa).

Belongs to the bacterial ribosomal protein bL19 family.

In terms of biological role, this protein is located at the 30S-50S ribosomal subunit interface and may play a role in the structure and function of the aminoacyl-tRNA binding site. In Limosilactobacillus fermentum (strain NBRC 3956 / LMG 18251) (Lactobacillus fermentum), this protein is Large ribosomal subunit protein bL19.